The sequence spans 358 residues: tRNA N6-adenosine threonylcarbamoyltransferase (358 aa).

Fe cation-binding residues include histidine 118 and histidine 122. Substrate is bound by residues 143–147, aspartate 176, glycine 189, and asparagine 298; that span reads IVSGG. Aspartate 326 lines the Fe cation pocket.

It belongs to the KAE1 / TsaD family. Requires Fe(2+) as cofactor.

The protein localises to the cytoplasm. It catalyses the reaction L-threonylcarbamoyladenylate + adenosine(37) in tRNA = N(6)-L-threonylcarbamoyladenosine(37) in tRNA + AMP + H(+). In terms of biological role, required for the formation of a threonylcarbamoyl group on adenosine at position 37 (t(6)A37) in tRNAs that read codons beginning with adenine. Is involved in the transfer of the threonylcarbamoyl moiety of threonylcarbamoyl-AMP (TC-AMP) to the N6 group of A37, together with TsaE and TsaB. TsaD likely plays a direct catalytic role in this reaction. The protein is tRNA N6-adenosine threonylcarbamoyltransferase of Rhodopirellula baltica (strain DSM 10527 / NCIMB 13988 / SH1).